Consider the following 1044-residue polypeptide: Diacylglycerol lipase-alpha (1044 aa).

The Cytoplasmic portion of the chain corresponds to 1–22 (MPGIVVFRRRWSVGSDDLVLPA). The chain crosses the membrane as a helical span at residues 23-43 (IFLFLLHTTWFVILSVVLFGL). Residues 44 to 60 (VYNPHEACSLNLVDHGR) lie on the Extracellular side of the membrane. A helical transmembrane segment spans residues 61–81 (GYLGILLSCMIAEMAIIWLSM). The Cytoplasmic segment spans residues 82–101 (RGGILYTEPRDSMQYVLYVR). Residues 102–122 (LAILVIEFIYAIVGIVWLTQY) traverse the membrane as a helical segment. Over 123–136 (YTSCNDLTAKNVTL) the chain is Extracellular. A glycan (N-linked (GlcNAc...) asparagine) is linked at N133. A helical transmembrane segment spans residues 137–157 (GMVVCNWVVILSVCITVLCVF). Residues 158 to 1044 (DPTGRTFVKL…KQDDLVISAR (887 aa)) lie on the Cytoplasmic side of the membrane. Active-site charge relay system residues include S472 and D524. 11 positions are modified to phosphoserine: S728, S730, S733, S744, S784, S786, S808, S810, S835, S849, and S954. The segment at 848-897 (LSKHSQDTQPLEAALGSGGVTPERPPSATIEEEEAAGGSEGGGVAPRGEL) is disordered. Residues 1013 to 1044 (QECLATDKIRTSTPTGHGASPTKQDDLVISAR) are disordered. Residue T1025 is modified to Phosphothreonine.

It belongs to the AB hydrolase superfamily. Lipase family. Interacts (via C-terminal) with CAMK2A; leading to the phosphorylation and inhibition of DAGLA enzymatic activity. Interacts (via PPXXF motif) with HOMER1 and HOMER2; this interaction is required for DAGLA membrane localization. The cofactor is Ca(2+). Phosphorylated at Ser-784 and Ser-810 by CAMK2A; phosphorylation by CAMK2A inhibits diacylglycerol lipase activity. Highly expressed by principal cells in the hippocampus. In embryonic brains, it is present in axonal tracts, while in adults it localizes to dendritic fields, correlating with the developmental change in requirement for 2-AG synthesis from the pre- to the postsynaptic compartment. Concentrated in heads of dendritic spines throughout the hippocampal formation. Highly compartmentalized into a wide perisynaptic annulus around the postsynaptic density of axospinous contacts but not intrasynaptically (at protein level).

Its subcellular location is the cell membrane. It is found in the cell projection. The protein resides in the dendritic spine membrane. It localises to the postsynaptic density membrane. The protein localises to the early endosome membrane. The catalysed reaction is a 1,2-diacyl-sn-glycerol + H2O = a 2-acylglycerol + a fatty acid + H(+). It catalyses the reaction 1-octadecanoyl-2-(5Z,8Z,11Z,14Z-eicosatetraenoyl)-sn-glycerol + H2O = 2-(5Z,8Z,11Z,14Z-eicosatetraenoyl)-glycerol + octadecanoate + H(+). It carries out the reaction 1,2-di-(9Z-octadecenoyl)-sn-glycerol + H2O = 2-(9Z-octadecenoyl)-glycerol + (9Z)-octadecenoate + H(+). The enzyme catalyses 1-(9Z-octadecenoyl)-2-(5Z,8Z,11Z,14Z-eicosatetraenoyl)-sn-glycerol + H2O = 2-(5Z,8Z,11Z,14Z-eicosatetraenoyl)-glycerol + (9Z)-octadecenoate + H(+). The catalysed reaction is 1-(9Z-octadecenoyl)-2-octadecanoyl-sn-glycerol + H2O = 2-octadecanoylglycerol + (9Z)-octadecenoate + H(+). It catalyses the reaction 1-(9Z-octadecenoyl)-2-(9Z,12Z-octadecadienoyl)-sn-glycerol + H2O = 2-(9Z,12Z-octadecadienoyl)-glycerol + (9Z)-octadecenoate + H(+). It carries out the reaction 1-(9Z-octadecenoyl)-2-O-(5Z,8Z,11Z,14Z-eicosatetraenyl)-sn-glycerol + H2O = 2-O-(5Z,8Z,11Z,14Z)-eicosatetraenylglycerol + (9Z)-octadecenoate + H(+). Its activity is regulated as follows. Inhibited by 1,2,3-triazole urea covalent inhibitor KT172, DH376 and DO34. Inhibited by p-hydroxy-mercuri-benzoate and HgCl(2), but not to PMSF. Also inhibited by RHC80267. Diacylglycerol lipase activity is inhibited by the phosphorylation of Ser-784 and Ser-810 by CAMK2A. Functionally, serine hydrolase that hydrolyzes arachidonic acid-esterified diacylglycerols (DAGs) to produce the principal endocannabinoid (eCB), 2-arachidonoylglycerol (2-AG). Preferentially hydrolyzes sn-1 fatty acids from diacylglycerols (DAG) that contain arachidonic acid (AA) esterified at the sn-2 position to biosynthesize 2-AG. Has negligible activity against other lipids including monoacylglycerols and phospholipids. Plays a key role in regulating 2-AG signaling in the central nervous system (CNS). Controls the activity of 2-AG as a retrograde messenger at neuronal synapses. Supports axonal growth during development and adult neurogenesis. Plays a role for eCB signaling in the physiological regulation of anxiety and depressive behaviors. Also regulates neuroinflammatory responses in the brain, in particular, LPS-induced microglial activation. In Mus musculus (Mouse), this protein is Diacylglycerol lipase-alpha (Dagla).